Reading from the N-terminus, the 319-residue chain is NADH-quinone oxidoreductase subunit H 1 (319 aa).

Transmembrane regions (helical) follow at residues 8-28 (LFNIFGILGTLLTLAALLIWI), 74-94 (LVFILAPTVVVIATLLAFAVI), 107-127 (IGLLFFLAMSSLSVYSVVLGG), 147-167 (LSYEVFMGLSLMGVVMLAGTF), 179-199 (MWFCIPQFLGLVVFLIAGIAE), 230-250 (FFVGEYLAILLISALIVTLFF), 258-278 (LPPLVWFFIKFSFFVLFFILL), and 297-317 (LMLPLALLNLVITGAVVLALD).

This sequence belongs to the complex I subunit 1 family. NDH-1 is composed of 14 different subunits. Subunits NuoA, H, J, K, L, M, N constitute the membrane sector of the complex.

It is found in the cell inner membrane. It carries out the reaction a quinone + NADH + 5 H(+)(in) = a quinol + NAD(+) + 4 H(+)(out). NDH-1 shuttles electrons from NADH, via FMN and iron-sulfur (Fe-S) centers, to quinones in the respiratory chain. The immediate electron acceptor for the enzyme in this species is believed to be ubiquinone. Couples the redox reaction to proton translocation (for every two electrons transferred, four hydrogen ions are translocated across the cytoplasmic membrane), and thus conserves the redox energy in a proton gradient. This subunit may bind ubiquinone. In Nitrosococcus oceani (strain ATCC 19707 / BCRC 17464 / JCM 30415 / NCIMB 11848 / C-107), this protein is NADH-quinone oxidoreductase subunit H 1.